Here is a 627-residue protein sequence, read N- to C-terminus: Pescadillo homolog (627 aa).

In terms of domain architecture, BRCT spans 321–414 (RLRTLFKGLK…QLLPTNKYFI (94 aa)). Disordered regions lie at residues 450 to 469 (HAQS…ETVD), 488 to 566 (YKKY…MVKP), and 595 to 627 (TIEA…KLGK). 2 positions are modified to phosphoserine: Ser-453 and Ser-457. Composition is skewed to acidic residues over residues 454–469 (DDDS…ETVD) and 497–521 (VNED…EELD). The segment covering 522 to 533 (EKTKRLQEEKQK) has biased composition (basic and acidic residues). A compositionally biased stretch (basic residues) spans 540–549 (KVHKVNKRQV). 2 stretches are compositionally biased toward basic and acidic residues: residues 550–559 (HKAEVDEHRL) and 595–615 (TIEA…RKEA). Positions 582–625 (KEKEEWLLRKKRRTIEASEKEARKTAKREARKEAAAAAAKASKL) form a coiled coil. The segment covering 616–627 (AAAAAKASKLGK) has biased composition (low complexity).

It belongs to the pescadillo family.

The protein localises to the nucleus. Its subcellular location is the nucleolus. It localises to the nucleoplasm. Functionally, required for maturation of ribosomal RNAs and formation of the large ribosomal subunit. In Drosophila simulans (Fruit fly), this protein is Pescadillo homolog.